Consider the following 323-residue polypeptide: Transcription factor LUX (323 aa).

3 disordered regions span residues 1–25 (MGEE…WEMG), 53–139 (ERSR…DLSG), and 267–298 (GYHH…ESNP). Residues 65 to 87 (SETTLSSLRGGSSGPNTSSSNNN) are compositionally biased toward low complexity. Residues 139–200 (GKTLKRPRLV…HLQKYRLYLK (62 aa)) constitute a DNA-binding region (myb-like GARP).

Interacts with ELF3 and forms a complex with ELF3 and ELF4.

The protein localises to the nucleus. Functionally, transcription factor that is essential for the generation of the circadian clock oscillation. Is necessary for activation of CCA1 and LHY expression. Is coregulated with TOC1 and seems to be repressed by CCA1 and LHY by direct binding of these proteins to the evening element in the LUX promoter. Directly regulates the expression of PRR9, a major component of the morning transcriptional feedback circuit, by binding specific sites on PRR9 promoter. Binds to its own promoter, inducing a negative auto-regulatory feedback loop within the core clock. Binds to ELF3 and associates with ELF4 in a diurnal complex which is required for the expression of the growth-promoting transcription factors PIF4 and PIF5 and subsequent hypocotyl growth in the early evening. This Arabidopsis thaliana (Mouse-ear cress) protein is Transcription factor LUX (LUX).